The chain runs to 384 residues: Probable protein phosphatase 2C 48 (384 aa).

Residues 47–358 form the PPM-type phosphatase domain; that stretch reads ITGEFSMAVV…DDITVIVVFL (312 aa). At Ser-78 the chain carries Phosphoserine. Residues Asp-89, Gly-90, Asp-290, and Asp-349 each contribute to the Mn(2+) site.

Belongs to the PP2C family. Mg(2+) serves as cofactor. It depends on Mn(2+) as a cofactor.

The enzyme catalyses O-phospho-L-seryl-[protein] + H2O = L-seryl-[protein] + phosphate. It catalyses the reaction O-phospho-L-threonyl-[protein] + H2O = L-threonyl-[protein] + phosphate. In terms of biological role, may dephosphorylate and repress plasma membrane H(+)-ATPases (PM H(+)-ATPases, e.g. AHA1 and AHA2), thus influencing negatively plant growth and fitness. This Arabidopsis thaliana (Mouse-ear cress) protein is Probable protein phosphatase 2C 48.